The following is a 201-amino-acid chain: ATP-dependent Clp protease proteolytic subunit (201 aa).

The active-site Nucleophile is Ser98. Residue His123 is part of the active site.

Belongs to the peptidase S14 family. As to quaternary structure, fourteen ClpP subunits assemble into 2 heptameric rings which stack back to back to give a disk-like structure with a central cavity, resembling the structure of eukaryotic proteasomes.

Its subcellular location is the cytoplasm. The enzyme catalyses Hydrolysis of proteins to small peptides in the presence of ATP and magnesium. alpha-casein is the usual test substrate. In the absence of ATP, only oligopeptides shorter than five residues are hydrolyzed (such as succinyl-Leu-Tyr-|-NHMec, and Leu-Tyr-Leu-|-Tyr-Trp, in which cleavage of the -Tyr-|-Leu- and -Tyr-|-Trp bonds also occurs).. In terms of biological role, cleaves peptides in various proteins in a process that requires ATP hydrolysis. Has a chymotrypsin-like activity. Plays a major role in the degradation of misfolded proteins. The polypeptide is ATP-dependent Clp protease proteolytic subunit (Rickettsia peacockii (strain Rustic)).